The chain runs to 325 residues: Diacylglycerol acyltransferase/mycolyltransferase Ag85B (325 aa).

The signal sequence occupies residues 1 to 40 (MTDVSRKIRAWGRRLMIGTAAAVVLPGLVGLAGGAATAGA). 82-83 (LR) contributes to the substrate binding site. The tract at residues 98–108 (FEWYYQSGLSI) is fibronectin-binding. Residues Cys127 and Cys132 are joined by a disulfide bond. 2 residues coordinate substrate: Ser166 and Asp194. Residue Ser166 is the Nucleophile of the active site. Glu270 is an active-site residue. Substrate contacts are provided by residues 272-275 (FVRS), Lys279, and 302-304 (HSW). The active site involves His302.

It belongs to the mycobacterial A85 antigen family.

It is found in the secreted. It carries out the reaction 2 alpha,alpha'-trehalose 6-mycolate = alpha,alpha'-trehalose 6,6'-bismycolate + alpha,alpha-trehalose. The catalysed reaction is an acyl-CoA + a 1,2-diacyl-sn-glycerol = a triacyl-sn-glycerol + CoA. In terms of biological role, the antigen 85 proteins (FbpA, FbpB, FbpC) are responsible for the high affinity of mycobacteria for fibronectin, a large adhesive glycoprotein, which facilitates the attachment of Mycobacteria to murine alveolar macrophages (AMs). They also help to maintain the integrity of the cell wall by catalyzing the transfer of mycolic acids to cell wall arabinogalactan and through the synthesis of alpha,alpha-trehalose dimycolate (TDM, cord factor). They catalyze the transfer of a mycoloyl residue from one molecule of alpha,alpha-trehalose monomycolate (TMM) to another TMM, leading to the formation of TDM. The polypeptide is Diacylglycerol acyltransferase/mycolyltransferase Ag85B (fbpB) (Mycobacterium bovis (strain BCG / Pasteur 1173P2)).